The primary structure comprises 456 residues: Choline kinase (456 aa).

This sequence belongs to the choline/ethanolamine kinase family. As to quaternary structure, monomer. Requires Mg(2+) as cofactor.

The protein localises to the cytoplasm. It is found in the nucleus. It carries out the reaction choline + ATP = phosphocholine + ADP + H(+). It functions in the pathway phospholipid metabolism; phosphatidylcholine biosynthesis; phosphocholine from choline: step 1/1. Its function is as follows. Catalyzes the committed step in the synthesis of phosphatidylcholine by the CDP-choline pathway. The sequence is that of Choline kinase from Schizosaccharomyces pombe (strain 972 / ATCC 24843) (Fission yeast).